The primary structure comprises 280 residues: Trypsin zeta (280 aa).

A signal peptide spans methionine 1–glycine 22. A propeptide spans leucine 23–arginine 38 (activation peptide). The Peptidase S1 domain maps to isoleucine 39–alanine 278. Cysteine 72 and cysteine 88 are oxidised to a cystine. Active-site charge relay system residues include histidine 87 and aspartate 134. Cystine bridges form between cysteine 198–cysteine 218 and cysteine 230–cysteine 254. The active-site Charge relay system is the serine 234.

Belongs to the peptidase S1 family.

It is found in the secreted. It localises to the extracellular space. It carries out the reaction Preferential cleavage: Arg-|-Xaa, Lys-|-Xaa.. This Drosophila melanogaster (Fruit fly) protein is Trypsin zeta (zetaTry).